A 542-amino-acid chain; its full sequence is Hydroxylamine reductase (542 aa).

Positions 3, 6, 15, and 21 each coordinate [4Fe-4S] cluster. Positions 238, 262, 307, 398, 426, 451, 485, and 487 each coordinate hybrid [4Fe-2O-2S] cluster. A Cysteine persulfide modification is found at Cys-398.

It belongs to the HCP family. [4Fe-4S] cluster is required as a cofactor. It depends on hybrid [4Fe-2O-2S] cluster as a cofactor.

It is found in the cytoplasm. It carries out the reaction A + NH4(+) + H2O = hydroxylamine + AH2 + H(+). In terms of biological role, catalyzes the reduction of hydroxylamine to form NH(3) and H(2)O. This is Hydroxylamine reductase from Microcystis aeruginosa (strain NIES-843 / IAM M-2473).